A 353-amino-acid chain; its full sequence is Inactive ADP-ribosyltransferase ARH2 (353 aa).

At Ser-27 the chain carries Phosphoserine.

It belongs to the ADP-ribosylglycohydrolase family. Expressed in the embryonic heart at E11.5.

Its subcellular location is the cytoplasm. It is found in the myofibril. The protein resides in the sarcomere. Required for myofibril assembly and outgrowth of the cardiac chambers in the developing heart. Appears to be catalytically inactive, showing no activity against O-acetyl-ADP-ribose. The chain is Inactive ADP-ribosyltransferase ARH2 (Adprhl1) from Mus musculus (Mouse).